We begin with the raw amino-acid sequence, 962 residues long: Glutamate receptor 1 (962 aa).

A signal peptide spans 1 to 25 (MFSSFSFLNMFGVLFTVFNLTVVQP). At 26–591 (YPSHIIIKSF…SVFSFMQPLS (566 aa)) the chain is on the extracellular side. N-linked (GlcNAc...) asparagine glycans are attached at residues Asn-190, Asn-220, Asn-275, Asn-333, Asn-441, and Asn-482. The helical transmembrane segment at 592–612 (TEIWMYIIFAYIGVSVVIFLV) threads the bilayer. The Cytoplasmic portion of the chain corresponds to 613-668 (SRFSPYEWRVEETSRGGFTISNDFSVYNCLWFTLAAFMQQGTDILPRSISGRIASS). A helical membrane pass occupies residues 669–689 (AWWFFTMIIVSSYTANLAAFL). At 690–855 (TLEKMQAPIE…GSSASLNLSK (166 aa)) the chain is on the extracellular side. An N-linked (GlcNAc...) asparagine glycan is attached at Asn-852. The helical transmembrane segment at 856 to 876 (VAGIFYILMGGMVISMLAALG) threads the bilayer. At 877-962 (EFLYRSRIEA…PANTLYNTAV (86 aa)) the chain is on the cytoplasmic side.

This sequence belongs to the glutamate-gated ion channel (TC 1.A.10.1) family. As to quaternary structure, interacts with sol-1. Interacts with cni-1; the interaction negatively regulates export of glr-1 from the endoplasmic reticulum to synapses. Interacts with usp-46; the interaction results in deubiquitination of glr-1. Post-translationally, ubiquitinated. Deubiquitinated by usp-46 which prevents its degradation. In terms of processing, glycosylated. In terms of tissue distribution, command interneurons of the locomotory control circuit (AIB, AVA, AVB, AVD, AVE and PVC) and motor neurons (RMD, RIM, SMD, AVG, PVQ and URY).

It is found in the postsynaptic cell membrane. The protein localises to the endoplasmic reticulum. It localises to the synapse. Its subcellular location is the cell membrane. The protein resides in the recycling endosome. It is found in the cell projection. The protein localises to the dendrite. It localises to the perikaryon. Functionally, non-NMDA (N-methyl-D-aspartate) ionotropic glutamate receptor. L-glutamate acts as an excitatory neurotransmitter at many synapses in the central nervous system. The postsynaptic actions of glutamate are mediated by a variety of receptors that are named according to their selective agonists. May contribute to a sensory discrimination between mechanical and chemical stimuli. Plays a role in controlling movement in response to environmental cues such as food availability and mechanosensory stimulation such as the nose touch response. In AIB interneurons, promotes omega turns, a movement that frequently follows backwards locomotion or 'reversals' in response to environmental cues while possibly playing an inhibitory role in alternative neurons to inhibit omega turns. This is Glutamate receptor 1 from Caenorhabditis elegans.